The primary structure comprises 363 residues: Peroxisomal (S)-2-hydroxyacid oxidase GLO3 (363 aa).

In terms of domain architecture, FMN hydroxy acid dehydrogenase spans 1-357 (MDQIVNVDEF…TRNHVRTENE (357 aa)). Residues 78 to 80 (PTG), serine 107, 128 to 130 (QIY), and threonine 156 each bind FMN. Tyrosine 130 provides a ligand contact to a 2-oxocarboxylate. Arginine 165 contributes to the a 2-oxocarboxylate binding site. Lysine 228 and serine 250 together coordinate FMN. Histidine 252 (proton acceptor) is an active-site residue. Arginine 255 contacts a 2-oxocarboxylate. FMN-binding positions include 283–287 (DGGVR) and 306–307 (GR). The short motif at 361–363 (SML) is the Microbody targeting signal element.

This sequence belongs to the FMN-dependent alpha-hydroxy acid dehydrogenase family. Homotetramer. The cofactor is FMN.

The protein resides in the peroxisome. The enzyme catalyses a (2S)-2-hydroxycarboxylate + O2 = a 2-oxocarboxylate + H2O2. It catalyses the reaction 2-hydroxy-4-methylpentanoate + O2 = 4-methyl-2-oxopentanoate + H2O2. It carries out the reaction 2-hydroxyhexanoate + O2 = 2-oxohexanoate + H2O2. The catalysed reaction is 2-hydroxyoctanoate + O2 = 2-oxooctanoate + H2O2. Functionally, oxidase that catalyzes the oxidation of a broad range of 2-hydroxyacids to the corresponding 2-oxoacids, with a reduction of O2 to H2O2. Displays the highest activity with leucic acid (2-hydroxy-4-methylpentanoate) and has intermediate activity with 2-hydroxyhexanoate and 2-hydroxyoctanote. Shows lower activity with 2-hydroxydodecanoate, valic acid, and isoleucic acid and extremely low activity with glycolate and L-lactate. Cannot use 2-hydroxyhexadecanoate or D-lactate as substrates. May be involved in the conversion or degradation of 2-hydroxyacids produced during the metabolism of fatty acids or amino acids. The chain is Peroxisomal (S)-2-hydroxyacid oxidase GLO3 (GLO3) from Arabidopsis thaliana (Mouse-ear cress).